A 108-amino-acid chain; its full sequence is Ribonuclease P protein component (108 aa).

This sequence belongs to the RnpA family. Consists of a catalytic RNA component (M1 or rnpB) and a protein subunit.

It catalyses the reaction Endonucleolytic cleavage of RNA, removing 5'-extranucleotides from tRNA precursor.. Functionally, RNaseP catalyzes the removal of the 5'-leader sequence from pre-tRNA to produce the mature 5'-terminus. It can also cleave other RNA substrates such as 4.5S RNA. The protein component plays an auxiliary but essential role in vivo by binding to the 5'-leader sequence and broadening the substrate specificity of the ribozyme. In Campylobacter jejuni subsp. doylei (strain ATCC BAA-1458 / RM4099 / 269.97), this protein is Ribonuclease P protein component.